A 63-amino-acid polypeptide reads, in one-letter code: MRYTACTESGQNQCICEGNDVCGQGRNCQFDSSGKKCVEGEGTRKPQNEGQHDFDPIPEEYLS.

The interaction with thrombin active site stretch occupies residues 1–3 (MRY). 3 disulfides stabilise this stretch: Cys-6/Cys-14, Cys-16/Cys-28, and Cys-22/Cys-37. The segment covering 35 to 55 (KKCVEGEGTRKPQNEGQHDFD) has biased composition (basic and acidic residues). A disordered region spans residues 35-63 (KKCVEGEGTRKPQNEGQHDFDPIPEEYLS). Residue Thr-43 is glycosylated (O-linked (GalNAc...) threonine). Residues 53-63 (DFDPIPEEYLS) form an interaction with fibrinogen-binding exosite of thrombin region. At Tyr-61 the chain carries Sulfotyrosine.

This sequence belongs to the protease inhibitor I14 (hirudin) family. O-linked glycan consists of Fuc-Gal-GalNAc trisaccharide.

Its subcellular location is the secreted. Hirudin is a potent thrombin-specific protease inhibitor. It forms a stable non-covalent complex with alpha-thrombin, thereby abolishing its ability to cleave fibrinogen. The protein is Hirudin-P6 of Hirudinaria manillensis (Asian medical leech).